The chain runs to 354 residues: Phosphate acyltransferase (354 aa).

This sequence belongs to the PlsX family. Homodimer. Probably interacts with PlsY.

It localises to the cytoplasm. The catalysed reaction is a fatty acyl-[ACP] + phosphate = an acyl phosphate + holo-[ACP]. It participates in lipid metabolism; phospholipid metabolism. In terms of biological role, catalyzes the reversible formation of acyl-phosphate (acyl-PO(4)) from acyl-[acyl-carrier-protein] (acyl-ACP). This enzyme utilizes acyl-ACP as fatty acyl donor, but not acyl-CoA. The chain is Phosphate acyltransferase from Nitrobacter hamburgensis (strain DSM 10229 / NCIMB 13809 / X14).